Here is a 168-residue protein sequence, read N- to C-terminus: Signal peptidase I V (168 aa).

Over Met-1–Trp-6 the chain is Cytoplasmic. Residues Phe-7–Ile-26 form a helical membrane-spanning segment. Residues Asp-27–Glu-168 lie on the Extracellular side of the membrane. Active-site residues include Ser-34 and Lys-75.

Belongs to the peptidase S26 family.

Its subcellular location is the cell membrane. The catalysed reaction is Cleavage of hydrophobic, N-terminal signal or leader sequences from secreted and periplasmic proteins.. The polypeptide is Signal peptidase I V (sipV) (Bacillus subtilis (strain 168)).